Consider the following 96-residue polypeptide: Phosphoribosyl-ATP pyrophosphatase (96 aa).

It belongs to the PRA-PH family.

The protein localises to the cytoplasm. The enzyme catalyses 1-(5-phospho-beta-D-ribosyl)-ATP + H2O = 1-(5-phospho-beta-D-ribosyl)-5'-AMP + diphosphate + H(+). It functions in the pathway amino-acid biosynthesis; L-histidine biosynthesis; L-histidine from 5-phospho-alpha-D-ribose 1-diphosphate: step 2/9. This Methanococcus aeolicus (strain ATCC BAA-1280 / DSM 17508 / OCM 812 / Nankai-3) protein is Phosphoribosyl-ATP pyrophosphatase.